A 502-amino-acid chain; its full sequence is Lysine--tRNA ligase (502 aa).

Residues Glu-409 and Glu-416 each contribute to the Mg(2+) site.

Belongs to the class-II aminoacyl-tRNA synthetase family. Homodimer. It depends on Mg(2+) as a cofactor.

It localises to the cytoplasm. The catalysed reaction is tRNA(Lys) + L-lysine + ATP = L-lysyl-tRNA(Lys) + AMP + diphosphate. This is Lysine--tRNA ligase from Prochlorococcus marinus (strain SARG / CCMP1375 / SS120).